The chain runs to 421 residues: Serine--tRNA ligase (421 aa).

229 to 231 (TSE) provides a ligand contact to L-serine. Residues 260 to 262 (RKE) and Val-276 each bind ATP. Glu-283 provides a ligand contact to L-serine. 347–350 (EIVS) contributes to the ATP binding site. Thr-383 is a binding site for L-serine.

This sequence belongs to the class-II aminoacyl-tRNA synthetase family. Type-1 seryl-tRNA synthetase subfamily. As to quaternary structure, homodimer. The tRNA molecule binds across the dimer.

It is found in the cytoplasm. It catalyses the reaction tRNA(Ser) + L-serine + ATP = L-seryl-tRNA(Ser) + AMP + diphosphate + H(+). It carries out the reaction tRNA(Sec) + L-serine + ATP = L-seryl-tRNA(Sec) + AMP + diphosphate + H(+). The protein operates within aminoacyl-tRNA biosynthesis; selenocysteinyl-tRNA(Sec) biosynthesis; L-seryl-tRNA(Sec) from L-serine and tRNA(Sec): step 1/1. Catalyzes the attachment of serine to tRNA(Ser). Is also able to aminoacylate tRNA(Sec) with serine, to form the misacylated tRNA L-seryl-tRNA(Sec), which will be further converted into selenocysteinyl-tRNA(Sec). This Nitrosopumilus maritimus (strain SCM1) protein is Serine--tRNA ligase.